A 301-amino-acid polypeptide reads, in one-letter code: Quinolinate synthase (301 aa).

His21 and Ser38 together coordinate iminosuccinate. Cys83 serves as a coordination point for [4Fe-4S] cluster. Iminosuccinate-binding positions include 109–111 (YIN) and Ser126. Residue Cys169 coordinates [4Fe-4S] cluster. Residues 195–197 (HPE) and Thr212 contribute to the iminosuccinate site. Cys257 provides a ligand contact to [4Fe-4S] cluster.

Belongs to the quinolinate synthase family. Type 2 subfamily. The cofactor is [4Fe-4S] cluster.

It is found in the cytoplasm. It carries out the reaction iminosuccinate + dihydroxyacetone phosphate = quinolinate + phosphate + 2 H2O + H(+). It participates in cofactor biosynthesis; NAD(+) biosynthesis; quinolinate from iminoaspartate: step 1/1. Its function is as follows. Catalyzes the condensation of iminoaspartate with dihydroxyacetone phosphate to form quinolinate. The polypeptide is Quinolinate synthase (Clostridium perfringens (strain ATCC 13124 / DSM 756 / JCM 1290 / NCIMB 6125 / NCTC 8237 / Type A)).